We begin with the raw amino-acid sequence, 80 residues long: Nuclear protein 1 (80 aa).

A disordered region spans residues 40 to 80 (GGRKGRTKREAAANTNRPSPGGHERKLLTKFQNSERKKAWR). Positions 61-80 (GHERKLLTKFQNSERKKAWR) are enriched in basic and acidic residues. Residues 64-80 (RKLLTKFQNSERKKAWR) carry the Nuclear localization signal motif.

The protein belongs to the NUPR family. In terms of assembly, monomer. Directly interacts with MSL1 and binds MORF4L1, two components of histone acetyltransferase complex; the interaction with MORF4L1 may be mediated by MSL1. Interacts with EP300; this interaction enhances the effect of EP300 on PAX2 transcription factor activity. Interacts with PAXIP1; this interaction prevents PAXIP1 inhibition of PAX2 transcription factor activity. Interacts with COPS5; this interaction allows COPS5-dependent CDKN1B nuclear to cytoplasm translocation. Interacts with RNF2. Interacts with FOXO3; this interaction represses FOXO3 transactivation. Interacts with PTMA; regulates apoptotic process. Interacts with MYOD1, EP300 and DDX5; this interaction coordinates the association of anti-proliferative and pro-myogenic proteins at the myogenin promoter. Interacts with TP53; interaction is stress-dependent. Forms a complex with EP300 and TP53; this complex binds CDKN1A promoter leading to transcriptional induction of CDKN1A. Phosphorylated. Phosphorylation promotes DNA-binding activity. Post-translationally, acetylated. Strongly activated in pancreatic acinar cells during the acute phase of pancreatitis, in developing pancreas and during pancreatic regeneration.

The protein localises to the nucleus. Its subcellular location is the cytoplasm. It is found in the perinuclear region. Its function is as follows. Transcription regulator that converts stress signals into a program of gene expression that empowers cells with resistance to the stress induced by a change in their microenvironment. Thereby participates in the regulation of many processes namely cell-cycle, apoptosis, autophagy and DNA repair responses. Controls cell cycle progression and protects cells from genotoxic stress induced by doxorubicin through the complex formation with TP53 and EP300 that binds CDKN1A promoter leading to transcriptional induction of CDKN1A. Protects pancreatic cancer cells from stress-induced cell death by binding the RELB promoter and activating its transcription, leading to IER3 transactivation. Negatively regulates apoptosis through interaction with PTMA. Inhibits autophagy-induced apoptosis in cardiac cells through FOXO3 interaction, inducing cytoplasmic translocation of FOXO3 thereby preventing the FOXO3 association with the pro-autophagic BNIP3 promoter. Inhibits cell growth and facilitates programmed cell death by apoptosis after adriamycin-induced DNA damage through transactivation of TP53. Regulates methamphetamine-induced apoptosis and autophagy through DDIT3-mediated endoplasmic reticulum stress pathway. Participates in DNA repair following gamma-irradiation by facilitating DNA access of the transcription machinery through interaction with MSL1 leading to inhibition of histone H4' Lys-16' acetylation (H4K16ac). Coactivator of PAX2 transcription factor activity, both by recruiting the EP300 cofactor to increase PAX2 transcription factor activity and by binding PAXIP1 to suppress PAXIP1-induced inhibition on PAX2. Positively regulates cell cycle progression through interaction with COPS5 inducing cytoplasmic translocation of CDKN1B leading to the CDKN1B degradation. Coordinates, through its interaction with EP300, the assiociation of MYOD1, EP300 and DDX5 to the MYOG promoter, leading to inhibition of cell-cycle progression and myogenic differentiation promotion. Negatively regulates beta cell proliferation via inhibition of cell-cycle regulatory genes expression through the suppression of their promoter activities. Also required for LHB expression and ovarian maturation. Exacerbates CNS inflammation and demyelination upon cuprizone treatment. In Rattus norvegicus (Rat), this protein is Nuclear protein 1.